Consider the following 420-residue polypeptide: F420-non-reducing hydrogenase vhu subunit A (420 aa).

Residues Cys-61 and Cys-64 each contribute to the Ni(2+) site.

This sequence belongs to the [NiFe]/[NiFeSe] hydrogenase large subunit family. As to quaternary structure, the F420-non-reducing hydrogenase vhu is composed of four subunits; VhuA, VhuD, VhuG and VhuU. Ni(2+) serves as cofactor.

The protein is F420-non-reducing hydrogenase vhu subunit A (vhuA) of Methanococcus voltae.